The chain runs to 251 residues: Probable transcriptional regulatory protein Cgl1663/cg1872 (251 aa).

The tract at residues 1–22 (MSGHSKWATTKHKKAANDAKRG) is disordered.

Belongs to the TACO1 family.

It is found in the cytoplasm. The protein is Probable transcriptional regulatory protein Cgl1663/cg1872 of Corynebacterium glutamicum (strain ATCC 13032 / DSM 20300 / JCM 1318 / BCRC 11384 / CCUG 27702 / LMG 3730 / NBRC 12168 / NCIMB 10025 / NRRL B-2784 / 534).